Consider the following 79-residue polypeptide: Putative antitoxin MM_2475 (79 aa).

Belongs to the UPF0330 family.

Possibly the antitoxin component of a type II toxin-antitoxin (TA) system. The polypeptide is Putative antitoxin MM_2475 (Methanosarcina mazei (strain ATCC BAA-159 / DSM 3647 / Goe1 / Go1 / JCM 11833 / OCM 88) (Methanosarcina frisia)).